Consider the following 105-residue polypeptide: MTQSPFTLEANGLVLAVRLTPRASRTGLDGVRTEASGRPVLSLRVAAPPVEGAANAALTAFVAKSLGLRKAEVTLLSGETSRTKRLLLSGDPQTLAARVEAWLGG.

It belongs to the UPF0235 family.

This is UPF0235 protein Mext_2130 from Methylorubrum extorquens (strain PA1) (Methylobacterium extorquens).